Here is a 133-residue protein sequence, read N- to C-terminus: MHELSIACEIFEQVMSTAKEHGATEVKHVTLQMGRLSHTNPEQLSFCFNVLADESIAKDADLIVEMIPPSLECECGYKGAVDEKKIRENCEFESELLAYAAVMECPVCGKPAQLTGGRELIIKSIEIETENQD.

Position 2 (histidine 2) interacts with Ni(2+). Zn(2+) contacts are provided by cysteine 73, cysteine 75, cysteine 105, and cysteine 108.

The protein belongs to the HypA/HybF family.

Its function is as follows. Involved in the maturation of [NiFe] hydrogenases. Required for nickel insertion into the metal center of the hydrogenase. This chain is Hydrogenase maturation factor HypA, found in Methanosarcina barkeri (strain Fusaro / DSM 804).